Here is a 550-residue protein sequence, read N- to C-terminus: Hydroxylamine reductase (550 aa).

C3, C6, C18, and C25 together coordinate [2Fe-2S] cluster. Residues H249, E273, C317, C405, C433, C458, E492, and K494 each contribute to the hybrid [4Fe-2O-2S] cluster site. The residue at position 405 (C405) is a Cysteine persulfide.

Belongs to the HCP family. [2Fe-2S] cluster serves as cofactor. The cofactor is hybrid [4Fe-2O-2S] cluster.

Its subcellular location is the cytoplasm. It carries out the reaction A + NH4(+) + H2O = hydroxylamine + AH2 + H(+). Catalyzes the reduction of hydroxylamine to form NH(3) and H(2)O. In Salmonella typhimurium (strain LT2 / SGSC1412 / ATCC 700720), this protein is Hydroxylamine reductase.